A 348-amino-acid chain; its full sequence is UDP-glucose 4-epimerase (348 aa).

Residues 12–14 (GYI), 33–37 (DNFHN), 66–67 (DI), phenylalanine 88, and lysine 92 each bind NAD(+). 132 to 134 (SAT) serves as a coordination point for substrate. The active-site Proton acceptor is tyrosine 157. The NAD(+) site is built by lysine 161 and tyrosine 185. Residues 185-187 (YFN), 206-208 (NNL), 224-226 (NVF), arginine 239, and 300-303 (REGD) each bind substrate.

This sequence belongs to the NAD(P)-dependent epimerase/dehydratase family. As to quaternary structure, homodimer. NAD(+) is required as a cofactor.

It carries out the reaction UDP-alpha-D-glucose = UDP-alpha-D-galactose. It catalyses the reaction UDP-N-acetyl-alpha-D-glucosamine = UDP-N-acetyl-alpha-D-galactosamine. It participates in carbohydrate metabolism; galactose metabolism. In terms of biological role, catalyzes two distinct but analogous reactions: the reversible epimerization of UDP-glucose to UDP-galactose and the reversible epimerization of UDP-N-acetylglucosamine to UDP-N-acetylgalactosamine. The reaction with UDP-Gal plays a critical role in the Leloir pathway of galactose catabolism in which galactose is converted to the glycolytic intermediate glucose 6-phosphate. It contributes to the catabolism of dietary galactose and enables the endogenous biosynthesis of both UDP-Gal and UDP-GalNAc when exogenous sources are limited. Both UDP-sugar interconversions are important in the synthesis of glycoproteins and glycolipids. This Pongo abelii (Sumatran orangutan) protein is UDP-glucose 4-epimerase (GALE).